Consider the following 781-residue polypeptide: Probable aminopeptidase 2 (781 aa).

Substrate contacts are provided by residues Glu105 and 237–241 (GAMEN). Residue His272 participates in Zn(2+) binding. Glu273 functions as the Proton acceptor in the catalytic mechanism. His276 and Glu295 together coordinate Zn(2+).

This sequence belongs to the peptidase M1 family. Requires Zn(2+) as cofactor.

It localises to the cytoplasm. The polypeptide is Probable aminopeptidase 2 (ape2) (Sulfurisphaera tokodaii (strain DSM 16993 / JCM 10545 / NBRC 100140 / 7) (Sulfolobus tokodaii)).